The primary structure comprises 391 residues: MFEVKHMDGIDVFFFMWAASLIFFMKAGFIALEIGQFRAKNVSYHCVLKLLDLAAVFIAYLFIGYGISYGFENIMPLITGTFDADLGAWWMKMVMFAAAAVTIITGGVAERIKILPYFIGALIVGGILYPIVEHLVWGGGFANLGINFHDYAGSGAVHLFGGLVGLMAAYVLGPRIDKYINGKPQAIPGHNIPIAVLGAFILAFGWYGFNIGSASGIANGVELASVAMATTMALAGGIIGGALSSRNDPLYTANGMCAGLVAVCSGVDLFTPIGAFIVGLLAGIQQPFTYKFIEEKLKIDDVCAIGPVHAMSGLIGVICAGIPFLLKADAVSKVSITGQIIGAIVIALIAIVGGLIIYKGLDLTIGLRVSEEAEKVGLDTAILQTTAYSEE.

Helical transmembrane passes span 12-32 (VFFF…FIAL), 51-71 (LDLA…SYGF), 88-108 (AWWM…TGGV), 112-132 (IKIL…YPIV), 152-172 (AGSG…AYVL), 192-212 (IPIA…FNIG), 223-243 (LASV…GGAL), 261-281 (VAVC…VGLL), 305-325 (IGPV…IPFL), and 338-358 (GQII…LIIY).

The protein belongs to the ammonia transporter channel (TC 1.A.11.2) family. Homotrimer. Interacts and forms a complex with GlnK1.

It is found in the cell membrane. Its activity is regulated as follows. Activity is regulated by the nitrogen regulatory protein GlnK1 via direct interaction. Formation of the GlnK1/Amt1 complex is decreased in the presence of Mg-ATP or 2-oxoglutarate. The presence of both effectors abolishes the formation of the complex. Functionally, involved in the uptake of ammonium/ammonia (NH(4)(+)/NH(3)). Transport is electrogenic. The protein is Ammonium transporter Amt1 of Methanocaldococcus jannaschii (strain ATCC 43067 / DSM 2661 / JAL-1 / JCM 10045 / NBRC 100440) (Methanococcus jannaschii).